A 150-amino-acid polypeptide reads, in one-letter code: SsrA-binding protein (150 aa).

Belongs to the SmpB family.

It is found in the cytoplasm. Required for rescue of stalled ribosomes mediated by trans-translation. Binds to transfer-messenger RNA (tmRNA), required for stable association of tmRNA with ribosomes. tmRNA and SmpB together mimic tRNA shape, replacing the anticodon stem-loop with SmpB. tmRNA is encoded by the ssrA gene; the 2 termini fold to resemble tRNA(Ala) and it encodes a 'tag peptide', a short internal open reading frame. During trans-translation Ala-aminoacylated tmRNA acts like a tRNA, entering the A-site of stalled ribosomes, displacing the stalled mRNA. The ribosome then switches to translate the ORF on the tmRNA; the nascent peptide is terminated with the 'tag peptide' encoded by the tmRNA and targeted for degradation. The ribosome is freed to recommence translation, which seems to be the essential function of trans-translation. This Borreliella afzelii (strain PKo) (Borrelia afzelii) protein is SsrA-binding protein.